The primary structure comprises 356 residues: Beta-hexosaminidase (356 aa).

Substrate-binding positions include aspartate 75, arginine 83, arginine 150, and 180-181 (KH). Residue histidine 193 is the Proton donor/acceptor of the active site. Aspartate 264 (nucleophile) is an active-site residue.

It belongs to the glycosyl hydrolase 3 family. NagZ subfamily.

The protein localises to the cytoplasm. The catalysed reaction is Hydrolysis of terminal non-reducing N-acetyl-D-hexosamine residues in N-acetyl-beta-D-hexosaminides.. It participates in cell wall biogenesis; peptidoglycan recycling. In terms of biological role, plays a role in peptidoglycan recycling by cleaving the terminal beta-1,4-linked N-acetylglucosamine (GlcNAc) from peptide-linked peptidoglycan fragments, giving rise to free GlcNAc, anhydro-N-acetylmuramic acid and anhydro-N-acetylmuramic acid-linked peptides. The protein is Beta-hexosaminidase of Aromatoleum aromaticum (strain DSM 19018 / LMG 30748 / EbN1) (Azoarcus sp. (strain EbN1)).